We begin with the raw amino-acid sequence, 220 residues long: Small ribosomal subunit protein eS8 (220 aa).

Disordered stretches follow at residues 1–41 (MGIS…LSSN) and 131–151 (AKKDAEGQDAEATTEEAKKSN). The segment covering 8–26 (MHKRRATGGKQKAWRKKRK) has biased composition (basic residues).

The protein belongs to the eukaryotic ribosomal protein eS8 family.

The protein is Small ribosomal subunit protein eS8 (RPS8) of Oryza sativa subsp. japonica (Rice).